Here is a 340-residue protein sequence, read N- to C-terminus: UDP-3-O-acylglucosamine N-acyltransferase (340 aa).

Residue His247 is the Proton acceptor of the active site.

The protein belongs to the transferase hexapeptide repeat family. LpxD subfamily. As to quaternary structure, homotrimer.

It catalyses the reaction a UDP-3-O-[(3R)-3-hydroxyacyl]-alpha-D-glucosamine + a (3R)-hydroxyacyl-[ACP] = a UDP-2-N,3-O-bis[(3R)-3-hydroxyacyl]-alpha-D-glucosamine + holo-[ACP] + H(+). The protein operates within bacterial outer membrane biogenesis; LPS lipid A biosynthesis. Functionally, catalyzes the N-acylation of UDP-3-O-acylglucosamine using 3-hydroxyacyl-ACP as the acyl donor. Is involved in the biosynthesis of lipid A, a phosphorylated glycolipid that anchors the lipopolysaccharide to the outer membrane of the cell. In Caulobacter sp. (strain K31), this protein is UDP-3-O-acylglucosamine N-acyltransferase.